The sequence spans 308 residues: UDP-N-acetylenolpyruvoylglucosamine reductase (308 aa).

The FAD-binding PCMH-type domain maps to Gln-32 to Gly-197. Arg-176 is a catalytic residue. The Proton donor role is filled by Ser-226. Glu-296 is a catalytic residue.

Belongs to the MurB family. FAD is required as a cofactor.

The protein localises to the cytoplasm. The enzyme catalyses UDP-N-acetyl-alpha-D-muramate + NADP(+) = UDP-N-acetyl-3-O-(1-carboxyvinyl)-alpha-D-glucosamine + NADPH + H(+). It participates in cell wall biogenesis; peptidoglycan biosynthesis. Its function is as follows. Cell wall formation. This is UDP-N-acetylenolpyruvoylglucosamine reductase from Staphylococcus saprophyticus subsp. saprophyticus (strain ATCC 15305 / DSM 20229 / NCIMB 8711 / NCTC 7292 / S-41).